Reading from the N-terminus, the 1025-residue chain is Adenylate-forming reductase 03009 (1025 aa).

Positions 38 to 422 (FEFHAKSNPQ…LGRIDNQVKI (385 aa)) are adenylation (A) domain. AMP contacts are provided by residues 332–333 (VT) and 412–415 (HLGR). Positions 556–638 (SLGSTNTKIS…AILIWICVKK (83 aa)) are thiolation and peptide carrier (T) domain. The segment at 682–900 (FIRRTAARVY…PPTKLWVKGV (219 aa)) is thioester reductase (TR) domain. NADP(+)-binding positions include 685 to 688 (RTAA), 769 to 771 (SAL), and Y840.

It belongs to the adenylate-forming reductase family.

Its function is as follows. Adenylate-forming reductase, a natural product biosynthesis enzyme that resembles non-ribosomal peptide synthetases, yet serves to modify one substrate, rather than to condense two or more building blocks. The A-domain preferentially accepts L-serine, L-alanine and L-valine as substrates. The natural product of the enzyme is not yet known. This chain is Adenylate-forming reductase 03009, found in Coprinopsis cinerea (strain Okayama-7 / 130 / ATCC MYA-4618 / FGSC 9003) (Inky cap fungus).